The following is a 289-amino-acid chain: MYB transcription factor 69 (289 aa).

2 consecutive HTH myb-type domains span residues 9–61 (KAGV…TNYL) and 62–116 (RPGI…KKKL). 2 consecutive DNA-binding regions (H-T-H motif) follow at residues 37–61 (WRAV…TNYL) and 89–112 (WAAI…NTHL). Disordered regions lie at residues 127 to 162 (APPR…ADST) and 225 to 252 (SSAI…QQQQ). Positions 139-154 (ADCRRHDMTRSSKDSH) are enriched in basic and acidic residues.

Mainly expressed in highly lignified tissues such as vascular tissues.

Its subcellular location is the nucleus. Functionally, transcription factor that binds to the promoter of MYB31 and MYB42 and activates directly their expression, thus repressing lignin biosynthesis. This Zea mays (Maize) protein is MYB transcription factor 69.